The chain runs to 333 residues: Tetraacyldisaccharide 4'-kinase (333 aa).

ATP is bound at residue 55-62 (SVGGNGKT).

Belongs to the LpxK family.

The catalysed reaction is a lipid A disaccharide + ATP = a lipid IVA + ADP + H(+). The protein operates within glycolipid biosynthesis; lipid IV(A) biosynthesis; lipid IV(A) from (3R)-3-hydroxytetradecanoyl-[acyl-carrier-protein] and UDP-N-acetyl-alpha-D-glucosamine: step 6/6. In terms of biological role, transfers the gamma-phosphate of ATP to the 4'-position of a tetraacyldisaccharide 1-phosphate intermediate (termed DS-1-P) to form tetraacyldisaccharide 1,4'-bis-phosphate (lipid IVA). This chain is Tetraacyldisaccharide 4'-kinase, found in Aeromonas hydrophila subsp. hydrophila (strain ATCC 7966 / DSM 30187 / BCRC 13018 / CCUG 14551 / JCM 1027 / KCTC 2358 / NCIMB 9240 / NCTC 8049).